Reading from the N-terminus, the 340-residue chain is Dihydroorotate dehydrogenase (quinone) (340 aa).

Residues 61 to 65 (AGLDK) and Thr-85 contribute to the FMN site. Position 65 (Lys-65) interacts with substrate. 110–114 (NRMGF) provides a ligand contact to substrate. 2 residues coordinate FMN: Asn-138 and Asn-171. Position 171 (Asn-171) interacts with substrate. Ser-174 functions as the Nucleophile in the catalytic mechanism. Residue Asn-176 participates in substrate binding. Residues Lys-216 and Thr-244 each contribute to the FMN site. 245 to 246 (NT) lines the substrate pocket. Residues Gly-267, Gly-296, and 317–318 (YS) each bind FMN.

It belongs to the dihydroorotate dehydrogenase family. Type 2 subfamily. As to quaternary structure, monomer. Requires FMN as cofactor.

It is found in the cell membrane. It catalyses the reaction (S)-dihydroorotate + a quinone = orotate + a quinol. It participates in pyrimidine metabolism; UMP biosynthesis via de novo pathway; orotate from (S)-dihydroorotate (quinone route): step 1/1. Catalyzes the conversion of dihydroorotate to orotate with quinone as electron acceptor. This chain is Dihydroorotate dehydrogenase (quinone), found in Ectopseudomonas mendocina (strain ymp) (Pseudomonas mendocina).